Consider the following 332-residue polypeptide: MKQVQTKRDWKKLAYDVVEEKMITKEDAIAILEADDTEVLEIMNAAYIIRHHHFGKKVKLNMIINTKSGLCPEDCGYCSQSIISEAPIDKYAWLTQEKIVEGAHEAIRRKAGTYCIVASGRRPTDKEVNHVIGAVKEIRETTDLKICCCLGFLNEDQAGLLAEAGVHRYNHNLNTHANNYDSICSTHTYDDRVDTVQKAKQAGISPCSGAIFGMGETIEERAEIAFELQRIDADSIPCNFLVAVKGTPLEGQKELTPVDCLKVLAMMRFVNPTKEIRISGGREINLRSVQPIGLFAANSIFVGDYLTTAGQEPTADWGMIADLGFEIEECAL.

One can recognise a Radical SAM core domain in the interval 53-282 (HFGKKVKLNM…TKEIRISGGR (230 aa)). The [4Fe-4S] cluster site is built by C71, C75, and C78. [2Fe-2S] cluster contacts are provided by C115, C147, C207, and R277.

It belongs to the radical SAM superfamily. Biotin synthase family. In terms of assembly, homodimer. [4Fe-4S] cluster serves as cofactor. It depends on [2Fe-2S] cluster as a cofactor.

The enzyme catalyses (4R,5S)-dethiobiotin + (sulfur carrier)-SH + 2 reduced [2Fe-2S]-[ferredoxin] + 2 S-adenosyl-L-methionine = (sulfur carrier)-H + biotin + 2 5'-deoxyadenosine + 2 L-methionine + 2 oxidized [2Fe-2S]-[ferredoxin]. The protein operates within cofactor biosynthesis; biotin biosynthesis; biotin from 7,8-diaminononanoate: step 2/2. Functionally, catalyzes the conversion of dethiobiotin (DTB) to biotin by the insertion of a sulfur atom into dethiobiotin via a radical-based mechanism. This chain is Biotin synthase, found in Bacillus cereus (strain B4264).